A 552-amino-acid polypeptide reads, in one-letter code: Small ribosomal subunit protein bS1 (552 aa).

6 S1 motif domains span residues 31–101 (TIKE…ISQQ), 116–179 (NAII…ISRK), 200–268 (TEPV…LSIK), 285–355 (GYAI…VSLK), 372–440 (GDIV…LSAK), and 457–521 (DSVI…ASVH).

The protein belongs to the bacterial ribosomal protein bS1 family.

In terms of biological role, binds mRNA; thus facilitating recognition of the initiation point. It is needed to translate mRNA with a short Shine-Dalgarno (SD) purine-rich sequence. This is Small ribosomal subunit protein bS1 (rpsA) from Helicobacter pylori (strain J99 / ATCC 700824) (Campylobacter pylori J99).